A 450-amino-acid chain; its full sequence is ATP-dependent protease ATPase subunit HslU (450 aa).

ATP contacts are provided by residues V29, 71-76 (GVGKTE), D261, E328, and R400.

This sequence belongs to the ClpX chaperone family. HslU subfamily. In terms of assembly, a double ring-shaped homohexamer of HslV is capped on each side by a ring-shaped HslU homohexamer. The assembly of the HslU/HslV complex is dependent on binding of ATP.

Its subcellular location is the cytoplasm. Its function is as follows. ATPase subunit of a proteasome-like degradation complex; this subunit has chaperone activity. The binding of ATP and its subsequent hydrolysis by HslU are essential for unfolding of protein substrates subsequently hydrolyzed by HslV. HslU recognizes the N-terminal part of its protein substrates and unfolds these before they are guided to HslV for hydrolysis. The sequence is that of ATP-dependent protease ATPase subunit HslU from Rickettsia felis (strain ATCC VR-1525 / URRWXCal2) (Rickettsia azadi).